Consider the following 503-residue polypeptide: Cell wall integrity and stress response component 2 (503 aa).

An N-terminal signal peptide occupies residues Met1–Ala23. At Asp24 to Gly325 the chain is on the extracellular side. The region spanning Gln25 to Asn118 is the WSC domain. The interval Asp124 to Thr260 is disordered. Residues Val326 to Val346 traverse the membrane as a helical segment. Residues Trp347–Arg503 lie on the Cytoplasmic side of the membrane. Thr402 is subject to Phosphothreonine. Phosphoserine is present on residues Ser455 and Ser458. Residues Ile470–Arg503 form a disordered region.

N-glycosylated.

Its subcellular location is the cell membrane. This Saccharomyces cerevisiae (strain ATCC 204508 / S288c) (Baker's yeast) protein is Cell wall integrity and stress response component 2 (WSC2).